The sequence spans 536 residues: G-protein coupled receptor Mth2 (536 aa).

5 disulfide bridges follow: cysteine 17–cysteine 71, cysteine 73–cysteine 78, cysteine 82–cysteine 177, cysteine 83–cysteine 96, and cysteine 138–cysteine 197. N-linked (GlcNAc...) asparagine glycans are attached at residues asparagine 24 and asparagine 33. N-linked (GlcNAc...) asparagine glycosylation is found at asparagine 103, asparagine 113, asparagine 118, asparagine 159, and asparagine 184. The helical transmembrane segment at 212–232 (YAMMFSIPFMMLTIAVYLLIP) threads the bilayer. Residues 233–241 (ELRNQHGKS) lie on the Cytoplasmic side of the membrane. Residues 242–262 (LVCYLIGLTVGYSSLCYVQLY) form a helical membrane-spanning segment. Over 263–273 (QVDATGVTCKV) the chain is Extracellular. Residues 274–294 (FGYTAYFFFMGAYMWLSVISF) traverse the membrane as a helical segment. The Cytoplasmic segment spans residues 295–314 (DLWHNFRGTRGINRFQEKKR). The chain crosses the membrane as a helical span at residues 315 to 335 (FLFYSLYSWGIALVFLAFTYC). Residues 336–365 (AQQLSNLPDNLKPGIGDGVYCWLDMSNWAA) lie on the Extracellular side of the membrane. A helical membrane pass occupies residues 366–386 (MIYFYGPILAIVVANTIMFIM). Over 387 to 417 (TAIKIHGVQREMARIIASENSTKNLRTEKDK) the chain is Cytoplasmic. A helical transmembrane segment spans residues 418–438 (FGLFLRLFLIMGITWLTELIS). The Extracellular segment spans residues 439-449 (YFVGSDKGWSK). The chain crosses the membrane as a helical span at residues 450-470 (LFYISDLANAMQGFLIFMLFV). Residues 471 to 536 (MKKKVKHLIT…VDPQKTTIFR (66 aa)) lie on the Cytoplasmic side of the membrane. Residues 487-506 (RDGSNQRQSQYSTKTTSSSV) are disordered. Residues 492-505 (QRQSQYSTKTTSSS) show a composition bias toward low complexity.

This sequence belongs to the G-protein coupled receptor 2 family. Mth subfamily. As to quaternary structure, homodimer.

Its subcellular location is the cell membrane. Its function is as follows. Involved in biological aging and stress response. Essential for adult survival. The protein is G-protein coupled receptor Mth2 (mth2) of Drosophila simulans (Fruit fly).